Reading from the N-terminus, the 1161-residue chain is Nuclear receptor-interacting protein 1 (1161 aa).

The segment at 1-416 (MTHGEELGSD…FESSTPTTID (416 aa)) is interaction with ZNF366. The short motif at 21 to 25 (LEGLL) is the LXXLL motif 1 element. The tract at residues 34 to 68 (GTAINKKSAGHKEEDQNFNLSGSAFPSCQSNGPTV) is disordered. Residues 50–68 (NFNLSGSAFPSCQSNGPTV) show a composition bias toward polar residues. The interval 78–335 (MLHLKKARLL…LNGQARALPA (258 aa)) is repression domain 1. Serine 104 carries the phosphoserine modification. N6-acetyllysine; alternate is present on lysine 111. Lysine 111 is covalently cross-linked (Glycyl lysine isopeptide (Lys-Gly) (interchain with G-Cter in SUMO2); alternate). The short motif at 133–137 (LASLL) is the LXXLL motif 2 element. Lysine 158 bears the N6-acetyllysine mark. Lysine 170 is covalently cross-linked (Glycyl lysine isopeptide (Lys-Gly) (interchain with G-Cter in SUMO2)). Positions 185–189 (LKTLL) match the LXXLL motif 3 motif. Residues lysine 195 and lysine 198 each participate in a glycyl lysine isopeptide (Lys-Gly) (interchain with G-Cter in SUMO2) cross-link. Threonine 207 is modified (phosphothreonine). At serine 218 the chain carries Phosphoserine. The LXXLL motif 4 signature appears at 267 to 271 (LALLL). Residues lysine 287 and lysine 311 each carry the N6-acetyllysine modification. Serine 358 bears the Phosphoserine mark. Lysine 374 participates in a covalent cross-link: Glycyl lysine isopeptide (Lys-Gly) (interchain with G-Cter in SUMO2). The residue at position 380 (serine 380) is a Phosphoserine. Residues 382 to 386 (LLHLL) carry the LXXLL motif 5 motif. A disordered region spans residues 393-436 (TPMNGHSQNERASSFESSTPTTIDEYSDNNPSFTDDSSGDESSY). The tract at residues 411-701 (TPTTIDEYSD…PAGPEPGLPG (291 aa)) is repression domain 2. The required for targeting to small nuclear foci stretch occupies residues 432 to 473 (DESSYSNCVPIDLSCKHRIEKPEAERPVSLENLTQSLLNTWD). Positions 441–447 (PIDLSCK) match the CTBP-binding; principal site motif. Lysine 447 and lysine 482 each carry N6-acetyllysine. Serine 488 carries the phosphoserine modification. The LXXLL motif 6 motif lies at 501-505 (LLQLL). Lysine 509 participates in a covalent cross-link: Glycyl lysine isopeptide (Lys-Gly) (interchain with G-Cter in SUMO2). The segment covering 517–552 (NASPQDIHSDGTKFSPQNYTRTSVIESPSTNRTTPV) has biased composition (polar residues). The disordered stretch occupies residues 517 to 559 (NASPQDIHSDGTKFSPQNYTRTSVIESPSTNRTTPVSTPPLYT). Phosphoserine is present on serine 519. Lysine 529 is modified (N6-acetyllysine). Serine 531, serine 543, and serine 565 each carry phosphoserine. A CTBP-binding motif is present at residues 566-570 (PINLS). Disordered regions lie at residues 604–623 (TKGK…AQNS), 639–702 (GLQS…LPGC), and 717–747 (LLGN…ERAA). An N6-acetyllysine modification is found at lysine 607. Serine 672 carries the post-translational modification Phosphoserine. The LXXLL motif 7 motif lies at 714–718 (LQLLL). The span at 724-747 (GKNEKKEKTPARDEAPQEHSERAA) shows a compositional bias: basic and acidic residues. The tract at residues 736–886 (DEAPQEHSER…TAVDTANHHS (151 aa)) is repression domain 3. The segment at 754-1161 (VKIKSEPCDD…NALTIKKESE (408 aa)) is interaction with ZNF366. Glycyl lysine isopeptide (Lys-Gly) (interchain with G-Cter in SUMO2) cross-links involve residues lysine 757 and lysine 803. The residue at position 808 (serine 808) is a Phosphoserine. The LXXLL motif 8 motif lies at 820-824 (LSRLL). The interval 829-848 (ESYPADEQDKSHRNSELPTL) is disordered. Residues lysine 851 and lysine 902 each participate in a glycyl lysine isopeptide (Lys-Gly) (interchain with G-Cter in SUMO2) cross-link. Lysine 932 bears the N6-acetyllysine; alternate mark. A Glycyl lysine isopeptide (Lys-Gly) (interchain with G-Cter in SUMO2); alternate cross-link involves residue lysine 932. An LXXLL motif 9 motif is present at residues 937-941 (LKQLL). Residues 947 to 951 (VRDLS) carry the CTBP-binding motif. Residues 950–962 (LSPHRSDSVPDTK) are compositionally biased toward basic and acidic residues. A disordered region spans residues 950-976 (LSPHRSDSVPDTKKKGHKNNAPGSKPE). Serine 1003 carries the phosphoserine modification. The segment at 1063–1076 (LTKTNPILYYMLQK) is ligand-dependent nuclear receptor binding. Glycyl lysine isopeptide (Lys-Gly) (interchain with G-Cter in SUMO2) cross-links involve residues lysine 1108, lysine 1118, and lysine 1157. Residues 1121–1161 (FFNLRSPYNSHMGNNASRPHSTNGEVYGLLGNALTIKKESE) form a repression domain 4 region.

In terms of assembly, interacts with CTBP1, CTBP2, ERS1, HDAC1, HDAC2, HDAC5, HDAC6, NR2C2, NR3C1, NR3C2, YWHAH, JUN and FOS. Found in a complex with both NR3C1 and YWHAH. Interacts with NR2C1 (sumoylated form and via the ligand-binding domain); the interaction results in promoting the repressor activity of NR2C1. Interacts with RARA and RXRB homodimers and RARA/RXRB heterodimers in the presence of ligand. Interacts with HDAC1 and HDAC3 via its N-terminal domain. Interacts with ZNF366. Interacts with RORA. In terms of processing, acetylation abolishes interaction with CTBP1. Phosphorylation enhances interaction with YWHAH. Acetylation regulates its nuclear translocation and corepressive activity. In terms of tissue distribution, expressed in the embryonic placenta. In the adult, expression is strong in the testis and brain. Also expressed at a high level in the white adipose tissue. Expressed constantly but at a weaker level in the adult heart, lung, stomach and kidney. Expressed moderately in the skeletal muscle. Expressed at a low level in the adult spleen, liver and brown adipose tissue. Expressed in the ovary at a high level in granulosa cells and at a lower level in the thecal and interstitial compartments.

Its subcellular location is the nucleus. In terms of biological role, modulates transcriptional repression by nuclear hormone receptors such as NR2C1, thyroid hormone receptor and retinoic acid receptor/RARA. Essential for cumulus expansion and follicle rupture during ovulation. Also controls the balance between fat accumulation and energy expenditure. Positive regulator of the circadian clock gene expression: stimulates transcription of BMAL1, CLOCK and CRY1 by acting as a coactivator for RORA and RORC. Involved in the regulation of ovarian function. Plays a role in renal development. This is Nuclear receptor-interacting protein 1 from Mus musculus (Mouse).